The following is a 362-amino-acid chain: Heme A synthase (362 aa).

5 helical membrane-spanning segments follow: residues 11 to 31, 102 to 122, 128 to 148, 159 to 179, and 198 to 218; these read AAIR…VLVG, VIGM…AVSG, LWLI…MVAS, VRLA…VWTL, and AWAL…VAGL. Position 262 (His-262) interacts with heme. Transmembrane regions (helical) follow at residues 264–286, 297–317, and 318–338; these read MTAY…AGAG, LAAI…VVPI, and SLAL…VLQA. A heme-binding site is contributed by His-323.

The protein belongs to the COX15/CtaA family. Type 2 subfamily. As to quaternary structure, interacts with CtaB. Heme b serves as cofactor.

It is found in the cell membrane. It catalyses the reaction Fe(II)-heme o + 2 A + H2O = Fe(II)-heme a + 2 AH2. The protein operates within porphyrin-containing compound metabolism; heme A biosynthesis; heme A from heme O: step 1/1. Its function is as follows. Catalyzes the conversion of heme O to heme A by two successive hydroxylations of the methyl group at C8. The first hydroxylation forms heme I, the second hydroxylation results in an unstable dihydroxymethyl group, which spontaneously dehydrates, resulting in the formyl group of heme A. The polypeptide is Heme A synthase (Bradyrhizobium sp. (strain ORS 278)).